The sequence spans 122 residues: Large ribosomal subunit protein uL14 (122 aa).

The protein belongs to the universal ribosomal protein uL14 family. In terms of assembly, part of the 50S ribosomal subunit. Forms a cluster with proteins L3 and L19. In the 70S ribosome, L14 and L19 interact and together make contacts with the 16S rRNA in bridges B5 and B8.

Functionally, binds to 23S rRNA. Forms part of two intersubunit bridges in the 70S ribosome. In Myxococcus xanthus (strain DK1622), this protein is Large ribosomal subunit protein uL14.